A 300-amino-acid chain; its full sequence is 33 kDa chaperonin (300 aa).

2 cysteine pairs are disulfide-bonded: Cys-247-Cys-249 and Cys-280-Cys-283.

Belongs to the HSP33 family. In terms of processing, under oxidizing conditions two disulfide bonds are formed involving the reactive cysteines. Under reducing conditions zinc is bound to the reactive cysteines and the protein is inactive.

Its subcellular location is the cytoplasm. Its function is as follows. Redox regulated molecular chaperone. Protects both thermally unfolding and oxidatively damaged proteins from irreversible aggregation. Plays an important role in the bacterial defense system toward oxidative stress. This chain is 33 kDa chaperonin, found in Prochlorococcus marinus (strain MIT 9312).